Reading from the N-terminus, the 157-residue chain is Probable chemoreceptor glutamine deamidase CheD (157 aa).

It belongs to the CheD family.

The enzyme catalyses L-glutaminyl-[protein] + H2O = L-glutamyl-[protein] + NH4(+). Probably deamidates glutamine residues to glutamate on methyl-accepting chemotaxis receptors (MCPs), playing an important role in chemotaxis. This is Probable chemoreceptor glutamine deamidase CheD from Archaeoglobus fulgidus (strain ATCC 49558 / DSM 4304 / JCM 9628 / NBRC 100126 / VC-16).